The sequence spans 770 residues: NAD-dependent malic enzyme (770 aa).

Residues 1–440 form a malic enzyme region; the sequence is MNTGDKAKSQ…KLNRFVFRSG (440 aa). The active-site Proton acceptor is Lys107. A divalent metal cation contacts are provided by Glu149 and Asp150. NAD(+) is bound by residues Asp175 and Asn300. Residues 441–770 are phosphate acetyltransferase; it reads FIMKPVFAAA…LAVVESSHPV (330 aa).

The protein in the N-terminal section; belongs to the malic enzymes family. This sequence in the C-terminal section; belongs to the phosphate acetyltransferase and butyryltransferase family. Homooctamer. Requires Mg(2+) as cofactor. The cofactor is Mn(2+).

It carries out the reaction (S)-malate + NAD(+) = pyruvate + CO2 + NADH. With respect to regulation, subject to substrate inhibition and shows allosteric regulation by acetyl-CoA. Functionally, required for symbiotic nitrogen fixation. Plays a key role in the conversion of malate to acetyl-CoA for efficient tricarboxylic acid cycle function in nitrogen-fixating bacteria. This Rhizobium meliloti (strain 1021) (Ensifer meliloti) protein is NAD-dependent malic enzyme (dme).